Here is a 280-residue protein sequence, read N- to C-terminus: Formamidopyrimidine-DNA glycosylase (280 aa).

P2 serves as the catalytic Schiff-base intermediate with DNA. E3 (proton donor) is an active-site residue. K53 (proton donor; for beta-elimination activity) is an active-site residue. DNA is bound by residues H91, R110, and R152. Residues 239 to 273 form an FPG-type zinc finger; that stretch reads HVYGRAGQPCDRCGTPIEKIVLGQRGTHFCPVCQP. The active-site Proton donor; for delta-elimination activity is R263.

This sequence belongs to the FPG family. Monomer. Requires Zn(2+) as cofactor.

It catalyses the reaction Hydrolysis of DNA containing ring-opened 7-methylguanine residues, releasing 2,6-diamino-4-hydroxy-5-(N-methyl)formamidopyrimidine.. It carries out the reaction 2'-deoxyribonucleotide-(2'-deoxyribose 5'-phosphate)-2'-deoxyribonucleotide-DNA = a 3'-end 2'-deoxyribonucleotide-(2,3-dehydro-2,3-deoxyribose 5'-phosphate)-DNA + a 5'-end 5'-phospho-2'-deoxyribonucleoside-DNA + H(+). Functionally, involved in base excision repair of DNA damaged by oxidation or by mutagenic agents. Acts as a DNA glycosylase that recognizes and removes damaged bases. Has a preference for oxidized purines, such as 7,8-dihydro-8-oxoguanine (8-oxoG). Has AP (apurinic/apyrimidinic) lyase activity and introduces nicks in the DNA strand. Cleaves the DNA backbone by beta-delta elimination to generate a single-strand break at the site of the removed base with both 3'- and 5'-phosphates. The chain is Formamidopyrimidine-DNA glycosylase (mutM) from Deinococcus radiodurans (strain ATCC 13939 / DSM 20539 / JCM 16871 / CCUG 27074 / LMG 4051 / NBRC 15346 / NCIMB 9279 / VKM B-1422 / R1).